We begin with the raw amino-acid sequence, 125 residues long: Ribosome-binding factor A (125 aa).

This sequence belongs to the RbfA family. As to quaternary structure, monomer. Binds 30S ribosomal subunits, but not 50S ribosomal subunits or 70S ribosomes.

It localises to the cytoplasm. In terms of biological role, one of several proteins that assist in the late maturation steps of the functional core of the 30S ribosomal subunit. Associates with free 30S ribosomal subunits (but not with 30S subunits that are part of 70S ribosomes or polysomes). Required for efficient processing of 16S rRNA. May interact with the 5'-terminal helix region of 16S rRNA. This Akkermansia muciniphila (strain ATCC BAA-835 / DSM 22959 / JCM 33894 / BCRC 81048 / CCUG 64013 / CIP 107961 / Muc) protein is Ribosome-binding factor A.